The primary structure comprises 65 residues: Large ribosomal subunit protein bL35 (65 aa).

It belongs to the bacterial ribosomal protein bL35 family.

This is Large ribosomal subunit protein bL35 from Acetivibrio thermocellus (strain ATCC 27405 / DSM 1237 / JCM 9322 / NBRC 103400 / NCIMB 10682 / NRRL B-4536 / VPI 7372) (Clostridium thermocellum).